The following is a 270-amino-acid chain: Regulatory protein RecX (270 aa).

It belongs to the RecX family.

The protein localises to the cytoplasm. In terms of biological role, modulates RecA activity. This Bacillus cereus (strain 03BB102) protein is Regulatory protein RecX.